The sequence spans 98 residues: Integration host factor subunit alpha (98 aa).

The interval 49–71 is disordered; it reads FGNFDLRDKNQRPGRNPKTGEDI.

This sequence belongs to the bacterial histone-like protein family. In terms of assembly, heterodimer of an alpha and a beta chain.

Functionally, this protein is one of the two subunits of integration host factor, a specific DNA-binding protein that functions in genetic recombination as well as in transcriptional and translational control. The chain is Integration host factor subunit alpha from Pectobacterium atrosepticum (strain SCRI 1043 / ATCC BAA-672) (Erwinia carotovora subsp. atroseptica).